We begin with the raw amino-acid sequence, 61 residues long: Large ribosomal subunit protein bL28 (61 aa).

Residues 1 to 26 (MAKDFINGKRTQFGNKRSHALNSSRR) form a disordered region. Residues 9–25 (KRTQFGNKRSHALNSSR) show a composition bias toward polar residues.

This sequence belongs to the bacterial ribosomal protein bL28 family.

This is Large ribosomal subunit protein bL28 from Limosilactobacillus reuteri (strain DSM 20016) (Lactobacillus reuteri).